Reading from the N-terminus, the 247-residue chain is Flagellin B1 (247 aa).

The propeptide occupies 1–20; the sequence is MNKLLRKVRKAFSLKADNKA.

The protein belongs to the archaeal flagellin family. In terms of processing, glycosylated.

It is found in the archaeal flagellum. Its function is as follows. Flagellin is the subunit protein which polymerizes to form the filaments of archaeal flagella. In Thermoplasma volcanium (strain ATCC 51530 / DSM 4299 / JCM 9571 / NBRC 15438 / GSS1), this protein is Flagellin B1.